The primary structure comprises 528 residues: Putative pumilio homolog 10 (528 aa).

One can recognise a PUM-HD domain in the interval 188-528 (EGSGASYPDE…KIFSKTILKK (341 aa)). Pumilio repeat units follow at residues 213 to 248 (EIYGSVNLMARDQIGCRALQKLVEEGTVLDSKVIFL), 249 to 284 (EIIDHVVELSMDPLGNYIVQKLLVVSDEEQRTMIVS), 285 to 323 (VLTSKPRELIKICLNTNGTRVIQKMIKTVKTKQQIALVK), 325 to 360 (ALEPGFLVLVNDSNGYHVLQSCLEFLVPNDNKFVVE), 361 to 396 (AATEYCAQLATHQYGCYVLQCSLINTVGLQHERLVA), 397 to 433 (EISRDSLRLSQDPFGNYVVQCLIDQQVSSVNLLLPFR), 434 to 465 (THCIELATQKFSSHVIEKCLRKYPESRAEIVR), and 466 to 503 (ELLSYPNFEQLLQDPYANYVIQTALSVTKGAVRARLVE).

The protein resides in the cytoplasm. Its function is as follows. Sequence-specific RNA-binding protein that regulates translation and mRNA stability by binding the 3'-UTR of target mRNAs. This is Putative pumilio homolog 10 (APUM10) from Arabidopsis thaliana (Mouse-ear cress).